A 327-amino-acid chain; its full sequence is Porphobilinogen deaminase (327 aa).

Cys250 is subject to S-(dipyrrolylmethanemethyl)cysteine.

It belongs to the HMBS family. As to quaternary structure, monomer. Dipyrromethane serves as cofactor.

The catalysed reaction is 4 porphobilinogen + H2O = hydroxymethylbilane + 4 NH4(+). The protein operates within porphyrin-containing compound metabolism; protoporphyrin-IX biosynthesis; coproporphyrinogen-III from 5-aminolevulinate: step 2/4. Functionally, tetrapolymerization of the monopyrrole PBG into the hydroxymethylbilane pre-uroporphyrinogen in several discrete steps. The polypeptide is Porphobilinogen deaminase (Paraburkholderia phymatum (strain DSM 17167 / CIP 108236 / LMG 21445 / STM815) (Burkholderia phymatum)).